A 455-amino-acid chain; its full sequence is Bifunctional protein GlmU (455 aa).

Residues 1–225 (MNIVILAAGM…EWETLGVNSK (225 aa)) form a pyrophosphorylase region. UDP-N-acetyl-alpha-D-glucosamine contacts are provided by residues 6–9 (LAAG), K20, Q71, 76–77 (GT), 98–100 (YGD), G135, E150, N165, and N223. D100 serves as a coordination point for Mg(2+). N223 lines the Mg(2+) pocket. Residues 226–246 (VQLAELERIHQRNLAQQLLED) form a linker region. Positions 247 to 455 (GVTLIDPARI…QRPVKQKKEG (209 aa)) are N-acetyltransferase. Positions 329 and 347 each coordinate UDP-N-acetyl-alpha-D-glucosamine. H359 (proton acceptor) is an active-site residue. The UDP-N-acetyl-alpha-D-glucosamine site is built by Y362 and N373. Acetyl-CoA is bound by residues A376, 382–383 (NY), S401, A419, and R436.

In the N-terminal section; belongs to the N-acetylglucosamine-1-phosphate uridyltransferase family. This sequence in the C-terminal section; belongs to the transferase hexapeptide repeat family. Homotrimer. The cofactor is Mg(2+).

It is found in the cytoplasm. The enzyme catalyses alpha-D-glucosamine 1-phosphate + acetyl-CoA = N-acetyl-alpha-D-glucosamine 1-phosphate + CoA + H(+). The catalysed reaction is N-acetyl-alpha-D-glucosamine 1-phosphate + UTP + H(+) = UDP-N-acetyl-alpha-D-glucosamine + diphosphate. Its pathway is nucleotide-sugar biosynthesis; UDP-N-acetyl-alpha-D-glucosamine biosynthesis; N-acetyl-alpha-D-glucosamine 1-phosphate from alpha-D-glucosamine 6-phosphate (route II): step 2/2. It functions in the pathway nucleotide-sugar biosynthesis; UDP-N-acetyl-alpha-D-glucosamine biosynthesis; UDP-N-acetyl-alpha-D-glucosamine from N-acetyl-alpha-D-glucosamine 1-phosphate: step 1/1. It participates in bacterial outer membrane biogenesis; LPS lipid A biosynthesis. Its function is as follows. Catalyzes the last two sequential reactions in the de novo biosynthetic pathway for UDP-N-acetylglucosamine (UDP-GlcNAc). The C-terminal domain catalyzes the transfer of acetyl group from acetyl coenzyme A to glucosamine-1-phosphate (GlcN-1-P) to produce N-acetylglucosamine-1-phosphate (GlcNAc-1-P), which is converted into UDP-GlcNAc by the transfer of uridine 5-monophosphate (from uridine 5-triphosphate), a reaction catalyzed by the N-terminal domain. This chain is Bifunctional protein GlmU, found in Ralstonia pickettii (strain 12J).